A 531-amino-acid chain; its full sequence is Dimethylnonatriene synthase (531 aa).

The helical transmembrane segment at 6-26 (TMSVAMALAAAIFVVLCSVVA) threads the bilayer. Position 464 (C464) interacts with heme.

It belongs to the cytochrome P450 family. The cofactor is heme.

It localises to the membrane. The enzyme catalyses (6E,10E)-geranyllinalool + reduced [NADPH--hemoprotein reductase] + O2 = (3E,7E)-4,8,12-trimethyltrideca 1,3,7,11-tetraene + but-3-en-2-one + oxidized [NADPH--hemoprotein reductase] + 2 H2O + H(+). It carries out the reaction (3S,6E)-nerolidol + reduced [NADPH--hemoprotein reductase] + O2 = (3E)-4,8-dimethylnona-1,3,7-triene + but-3-en-2-one + oxidized [NADPH--hemoprotein reductase] + 2 H2O + H(+). The protein operates within secondary metabolite biosynthesis; terpenoid biosynthesis. Involved in the biosynthesis of homoterpenes, attractants of herbivores parasitoids and predators (e.g. predatory mites and parasitoid wasps). Component of the volatile terpenes biosynthesis pathways. Converts mainly nerolidol to dimethylnonatriene (DMNT) and, to a lower extent, geranyllinalool to trimethyltridecatetraene (TMTT). The protein is Dimethylnonatriene synthase of Zea mays (Maize).